Reading from the N-terminus, the 232-residue chain is MATPGRPWAQARSAYRASEVLRRVTGRRRDPGPQSNGPGQEDARAPGRLARLLGQLRAEAASRSEVPRLLKLVERAGAGAAGAGERTGAHSRGSVCSVCGEPRGRATYPAGVLEVSERRLQEGLAAVREELGAEIEALRAELRAELDALRALLPPPPPSPPARREPRAVPRATPRGPTLLRTLGTVSALVAASRPADDAPDGPAECGAHRAPVRKNHKKMPVPPGAPQGGGD.

3 disordered regions span residues 1-47 (MATP…RAPG), 153-178 (LPPPPPSPPARREPRAVPRATPRGPT), and 191-232 (AASR…GGGD). Over residues 19-31 (EVLRRVTGRRRDP) the composition is skewed to basic and acidic residues. Residues 211-220 (APVRKNHKKM) are compositionally biased toward basic residues.

The protein belongs to the FAM246 family.

This is Protein FAM246A from Homo sapiens (Human).